A 145-amino-acid polypeptide reads, in one-letter code: uncharacterized protein (145 aa).

A helical membrane pass occupies residues 46–66 (FFFLFFLFFFFFFTFQFLVAF).

The protein resides in the membrane. This is an uncharacterized protein from Saccharomyces cerevisiae (strain ATCC 204508 / S288c) (Baker's yeast).